The following is a 132-amino-acid chain: Small ribosomal subunit protein uS8 (132 aa).

It belongs to the universal ribosomal protein uS8 family. In terms of assembly, part of the 30S ribosomal subunit. Contacts proteins S5 and S12.

Its function is as follows. One of the primary rRNA binding proteins, it binds directly to 16S rRNA central domain where it helps coordinate assembly of the platform of the 30S subunit. The sequence is that of Small ribosomal subunit protein uS8 from Staphylococcus haemolyticus (strain JCSC1435).